Here is a 550-residue protein sequence, read N- to C-terminus: Hydroxylamine reductase (550 aa).

[2Fe-2S] cluster is bound by residues C3, C6, C18, and C25. Hybrid [4Fe-2O-2S] cluster-binding residues include H249, E273, C317, C405, C433, C458, E492, and K494. C405 is modified (cysteine persulfide).

It belongs to the HCP family. [2Fe-2S] cluster serves as cofactor. Requires hybrid [4Fe-2O-2S] cluster as cofactor.

The protein resides in the cytoplasm. It catalyses the reaction A + NH4(+) + H2O = hydroxylamine + AH2 + H(+). Catalyzes the reduction of hydroxylamine to form NH(3) and H(2)O. The chain is Hydroxylamine reductase from Salmonella gallinarum (strain 287/91 / NCTC 13346).